Consider the following 20-residue polypeptide: Brevinin-1ITa (20 aa).

Methionine 8 bears the Methionine sulfoxide; partial mark. Cysteines 14 and 20 form a disulfide.

Belongs to the frog skin active peptide (FSAP) family. Brevinin subfamily. In terms of tissue distribution, expressed by the skin glands.

Its subcellular location is the secreted. Functionally, antimicrobial peptide active against Gram-positive bacterium S.epidermidis ATCC 12228 (MIC=4 uM), against Gram-negative bacterium E.coli ATCC 25922 (MIC=64 uM) and against yeast C.parapsilosis ATCC 22019 (MIC=16 uM). Has hemolytic and cytotoxic activity. The sequence is that of Brevinin-1ITa from Rana italica (Italian stream frog).